Consider the following 350-residue polypeptide: tRNA uridine(34) hydroxylase (350 aa).

Residues 146–240 (DDPDALFIDM…YARKAREQGL (95 aa)) enclose the Rhodanese domain. The active-site Cysteine persulfide intermediate is C200.

Belongs to the TrhO family.

It catalyses the reaction uridine(34) in tRNA + AH2 + O2 = 5-hydroxyuridine(34) in tRNA + A + H2O. In terms of biological role, catalyzes oxygen-dependent 5-hydroxyuridine (ho5U) modification at position 34 in tRNAs, the first step in 5-carboxymethoxyuridine (cmo5U) biosynthesis. May be part of an alternate pathway, which is able to bypass cmo5U biogenesis in a subset of tRNAs under aerobic conditions. The sequence is that of tRNA uridine(34) hydroxylase from Escherichia coli (strain SMS-3-5 / SECEC).